Consider the following 272-residue polypeptide: Expansin-B16 (272 aa).

An N-terminal signal peptide occupies residues 1 to 25 (MAAFSSSSSAPMLIRSVLFVSLLSA). The 111-residue stretch at 63-173 (GGACGYGTLV…RRTACKYGGK (111 aa)) folds into the Expansin-like EG45 domain. 3 cysteine pairs are disulfide-bonded: C66-C95, C98-C168, and C103-C109. Residues 186–267 (FWLSLLVEFE…NWTPKATYTS (82 aa)) form the Expansin-like CBD domain.

This sequence belongs to the expansin family. Expansin B subfamily.

It is found in the secreted. The protein localises to the cell wall. It localises to the membrane. In terms of biological role, may cause loosening and extension of plant cell walls by disrupting non-covalent bonding between cellulose microfibrils and matrix glucans. No enzymatic activity has been found. May be required for rapid internodal elongation in deepwater rice during submergence. This Oryza sativa subsp. japonica (Rice) protein is Expansin-B16 (EXPB16).